Consider the following 234-residue polypeptide: Sugar fermentation stimulation protein A (234 aa).

The segment at residues 201 to 220 (LLSEAQQRGVEILAYKAEIS) is a DNA-binding region (H-T-H motif).

Belongs to the SfsA family.

Functionally, binds to DNA non-specifically. Could be a regulatory factor involved in maltose metabolism. This is Sugar fermentation stimulation protein A from Escherichia coli (strain 55989 / EAEC).